The sequence spans 471 residues: Tryptophanase (471 aa).

Lys5, Lys115, and Lys156 each carry N6-acetyllysine. Lys270 bears the N6-(pyridoxal phosphate)lysine mark. N6-acetyllysine is present on Lys450.

It belongs to the beta-eliminating lyase family. In terms of assembly, homotetramer. The cofactor is pyridoxal 5'-phosphate.

It catalyses the reaction L-tryptophan + H2O = indole + pyruvate + NH4(+). It functions in the pathway amino-acid degradation; L-tryptophan degradation via pyruvate pathway; indole and pyruvate from L-tryptophan: step 1/1. In Escherichia coli O6:H1 (strain CFT073 / ATCC 700928 / UPEC), this protein is Tryptophanase.